A 248-amino-acid polypeptide reads, in one-letter code: Triosephosphate isomerase (248 aa).

9–11 (NWK) contacts substrate. The Electrophile role is filled by His-101. The active-site Proton acceptor is the Glu-170. Residues Gly-176, Ser-208, and 229 to 230 (GG) contribute to the substrate site.

Belongs to the triosephosphate isomerase family. In terms of assembly, homodimer.

It is found in the cytoplasm. It carries out the reaction D-glyceraldehyde 3-phosphate = dihydroxyacetone phosphate. The protein operates within carbohydrate biosynthesis; gluconeogenesis. Its pathway is carbohydrate degradation; glycolysis; D-glyceraldehyde 3-phosphate from glycerone phosphate: step 1/1. Functionally, involved in the gluconeogenesis. Catalyzes stereospecifically the conversion of dihydroxyacetone phosphate (DHAP) to D-glyceraldehyde-3-phosphate (G3P). The sequence is that of Triosephosphate isomerase from Mycoplasmopsis pulmonis (strain UAB CTIP) (Mycoplasma pulmonis).